The sequence spans 405 residues: FK506-binding protein 4 (405 aa).

Disordered regions lie at residues 49-117 and 164-297; these read THNP…EDEL and QQDE…PQKK. Composition is skewed to acidic residues over residues 59-84, 98-117, and 165-201; these read ESDD…EMEV, VEEE…EDEL, and QDED…EEEA. Basic and acidic residues-rich tracts occupy residues 238 to 252 and 265 to 276; these read RKAE…EDAA and AKVEGEKAEEKP. Residues 319-405 form the PPIase FKBP-type domain; that stretch reads GKRLGMRYIG…KFDVKLVSIN (87 aa).

The protein belongs to the FKBP-type PPIase family. FKBP3/4 subfamily. In terms of assembly, binds to histones H3 and H4.

It is found in the nucleus. It carries out the reaction [protein]-peptidylproline (omega=180) = [protein]-peptidylproline (omega=0). Its activity is regulated as follows. Inhibited by both FK506 and rapamycin. Its function is as follows. PPIase that acts as a histone chaperone. Histone proline isomerase that increases the rate of cis-trans isomerization at prolines on the histone H3 N-terminal tail. Proline isomerization influences H3 methylation thereby regulating gene expression. The chain is FK506-binding protein 4 (FPR4) from Cryptococcus neoformans var. neoformans serotype D (strain B-3501A) (Filobasidiella neoformans).